Reading from the N-terminus, the 367-residue chain is Probable dual-specificity RNA methyltransferase RlmN (367 aa).

The active-site Proton acceptor is the E92. The region spanning 98-326 (QEYGLSVCVT…YDTLKKNGIN (229 aa)) is the Radical SAM core domain. C105 and C341 are joined by a disulfide. Residues C112, C116, and C119 each coordinate [4Fe-4S] cluster. S-adenosyl-L-methionine-binding positions include 164–165 (GE), S196, 219–221 (SLH), and N297. C341 functions as the S-methylcysteine intermediate in the catalytic mechanism.

This sequence belongs to the radical SAM superfamily. RlmN family. [4Fe-4S] cluster serves as cofactor.

It is found in the cytoplasm. It carries out the reaction adenosine(2503) in 23S rRNA + 2 reduced [2Fe-2S]-[ferredoxin] + 2 S-adenosyl-L-methionine = 2-methyladenosine(2503) in 23S rRNA + 5'-deoxyadenosine + L-methionine + 2 oxidized [2Fe-2S]-[ferredoxin] + S-adenosyl-L-homocysteine. The enzyme catalyses adenosine(37) in tRNA + 2 reduced [2Fe-2S]-[ferredoxin] + 2 S-adenosyl-L-methionine = 2-methyladenosine(37) in tRNA + 5'-deoxyadenosine + L-methionine + 2 oxidized [2Fe-2S]-[ferredoxin] + S-adenosyl-L-homocysteine. Its function is as follows. Specifically methylates position 2 of adenine 2503 in 23S rRNA and position 2 of adenine 37 in tRNAs. In Listeria welshimeri serovar 6b (strain ATCC 35897 / DSM 20650 / CCUG 15529 / CIP 8149 / NCTC 11857 / SLCC 5334 / V8), this protein is Probable dual-specificity RNA methyltransferase RlmN.